The sequence spans 603 residues: Palladin (603 aa).

The interval 63–67 is interaction with VASP; it reads FPPPP. Phosphoserine is present on S133. Positions 134–156 are disordered; that stretch reads PPTPAALLSPTKEPPPLLAKPKL. T136 carries the phosphothreonine modification. Phosphoserine is present on residues S142, S170, S256, and S261. The Ig-like C2-type 1 domain maps to 278–362; the sequence is PFFEMKLKHY…MAANTQGRVS (85 aa). The disordered stretch occupies residues 373 to 402; that stretch reads NQRGRSPRSPPGHPHARRPRSRSRDSGDEN. Residues S378, S381, and S393 each carry the phosphoserine modification. At S395 the chain carries Phosphoserine; by PKB/AKT1. At S398 the chain carries Phosphoserine. 2 consecutive Ig-like C2-type domains span residues 412-503 and 511-601; these read PHFL…LVVA and PVFI…ARLD. 2 interaction with EZR regions span residues 414–503 and 513–603; these read FLQA…LVVA and FIEK…LDVY. A disulfide bond links C433 and C485.

It belongs to the myotilin/palladin family. In terms of assembly, interacts with EPS8. Interacts with LASP1. Interacts with VASP. Interacts with ACTN. Interacts with SORBS2. Interacts with PFN1. Interacts with LPP. Interacts with SPIN90. Interacts with SRC. Interacts with EZR. Interacts with RAI14. Post-translationally, phosphorylated predominantly on serines and, to a lesser extent, on tyrosines. Phosphorylation at Ser-395 by PKB/AKT1 modulates cytoskeletal organization and cell motility. As to expression, in adult central nervous system is detected in the brain and spinal cord, specially in the olfactory bulb, cerebral and cerebellar cortices, hippocampus, amygdala, superior colluculus, and superficial laminae of the spinal dorsal horn.

The protein localises to the cytoplasm. The protein resides in the cytoskeleton. It localises to the cell junction. Its subcellular location is the focal adhesion. It is found in the myofibril. The protein localises to the sarcomere. The protein resides in the z line. It localises to the cell projection. Its subcellular location is the ruffle. It is found in the podosome. The protein localises to the lamellipodium. The protein resides in the axon. It localises to the growth cone. Functionally, cytoskeletal protein required for organization of normal actin cytoskeleton. Roles in establishing cell morphology, motility, cell adhesion and cell-extracellular matrix interactions in a variety of cell types. May function as a scaffolding molecule with the potential to influence both actin polymerization and the assembly of existing actin filaments into higher-order arrays. Binds to proteins that bind to either monomeric or filamentous actin. Localizes at sites where active actin remodeling takes place, such as lamellipodia and membrane ruffles. Different isoforms may have functional differences. Plays a role in neurite outgrowth and in the establishment of polarity during neuronal morphogenesis. Participates in the acquisition of the reactive astrocyte morphology. The protein is Palladin (Palld) of Rattus norvegicus (Rat).